The chain runs to 776 residues: Protein SEY1 (776 aa).

The Cytoplasmic segment spans residues 1-681 (MADRPAIQLI…KRSIITTRTH (681 aa)). Residues 34-263 (GLDYHVISVF…TENYYFKPQY (230 aa)) enclose the GB1/RHD3-type G domain. 44–51 (GSQSSGKS) contributes to the GTP binding site. A helical transmembrane segment spans residues 682–702 (IPPWIYVLLAVLGWNEFVAVI). Residues 703–705 (RNP) are Lumenal-facing. Residues 706-726 (LFVTLTLILGATFFVIHKFGL) traverse the membrane as a helical segment. The Cytoplasmic segment spans residues 727–776 (WGPVVNVVQSAVGETRTAIKDKLRQFVVEDHEVKESFEMKDFSKNEQKEK).

Belongs to the TRAFAC class dynamin-like GTPase superfamily. GB1/RHD3 GTPase family. RHD3 subfamily. In terms of assembly, interacts with RTN1 and YOP1; GTP binding is not required for these interactions.

It is found in the endoplasmic reticulum membrane. Its function is as follows. Cooperates with the reticulon proteins RTN1 and RTN2 and the tubule-shaping DP1 family protein YOP1 to generate and maintain the structure of the tubular endoplasmic reticulum network. Has GTPase activity, which is required for its function in ER organization. This chain is Protein SEY1, found in Saccharomyces cerevisiae (strain ATCC 204508 / S288c) (Baker's yeast).